Consider the following 380-residue polypeptide: Histidinol-phosphate aminotransferase (380 aa).

An N6-(pyridoxal phosphate)lysine modification is found at Lys235.

This sequence belongs to the class-II pyridoxal-phosphate-dependent aminotransferase family. Histidinol-phosphate aminotransferase subfamily. In terms of assembly, homodimer. Requires pyridoxal 5'-phosphate as cofactor.

The enzyme catalyses L-histidinol phosphate + 2-oxoglutarate = 3-(imidazol-4-yl)-2-oxopropyl phosphate + L-glutamate. The protein operates within amino-acid biosynthesis; L-histidine biosynthesis; L-histidine from 5-phospho-alpha-D-ribose 1-diphosphate: step 7/9. The sequence is that of Histidinol-phosphate aminotransferase from Rhodococcus opacus (strain B4).